A 372-amino-acid polypeptide reads, in one-letter code: Phospho-N-acetylmuramoyl-pentapeptide-transferase (372 aa).

The next 10 membrane-spanning stretches (helical) occupy residues 25-45 (RSLL…PVMI), 73-93 (TMGG…WADL), 98-118 (VWIV…DDWI), 134-154 (FFWT…IAQN), 176-196 (SIPL…YLVI), 211-231 (GLAI…AYLA), 251-271 (LVVI…YNAH), 275-295 (IFMG…IAVM), 300-320 (IVFA…FLQI), and 349-369 (QVVT…LMTL).

This sequence belongs to the glycosyltransferase 4 family. MraY subfamily. The cofactor is Mg(2+).

Its subcellular location is the cell inner membrane. It catalyses the reaction UDP-N-acetyl-alpha-D-muramoyl-L-alanyl-gamma-D-glutamyl-meso-2,6-diaminopimeloyl-D-alanyl-D-alanine + di-trans,octa-cis-undecaprenyl phosphate = di-trans,octa-cis-undecaprenyl diphospho-N-acetyl-alpha-D-muramoyl-L-alanyl-D-glutamyl-meso-2,6-diaminopimeloyl-D-alanyl-D-alanine + UMP. It participates in cell wall biogenesis; peptidoglycan biosynthesis. Catalyzes the initial step of the lipid cycle reactions in the biosynthesis of the cell wall peptidoglycan: transfers peptidoglycan precursor phospho-MurNAc-pentapeptide from UDP-MurNAc-pentapeptide onto the lipid carrier undecaprenyl phosphate, yielding undecaprenyl-pyrophosphoryl-MurNAc-pentapeptide, known as lipid I. This chain is Phospho-N-acetylmuramoyl-pentapeptide-transferase, found in Acinetobacter baylyi (strain ATCC 33305 / BD413 / ADP1).